A 233-amino-acid chain; its full sequence is 27 kDa hemolymph glycoprotein (233 aa).

A signal peptide spans 1 to 17 (MIWKTLIVAFMATAVLA). N-linked (GlcNAc...) asparagine glycans are attached at residues asparagine 125 and asparagine 156.

This sequence belongs to the UPF0408 family. N-glycosylated. As to expression, hemolymph.

The protein localises to the secreted. The polypeptide is 27 kDa hemolymph glycoprotein (Manduca sexta (Tobacco hawkmoth)).